Reading from the N-terminus, the 546-residue chain is Alpha-isocomene synthase (546 aa).

Positions 299, 303, 443, and 451 each coordinate Mg(2+). The short motif at 299–303 is the DDXXD motif element; the sequence is DDTYD.

It belongs to the terpene synthase family. Tpsa subfamily. It depends on Mg(2+) as a cofactor. Requires Mn(2+) as cofactor. Highly expressed in roots, lower levels in stems and leaves and detected in disk florets, but not in ray florets.

It carries out the reaction (2E,6E)-farnesyl diphosphate = (-)-alpha-isocomene + diphosphate. It participates in secondary metabolite biosynthesis; terpenoid biosynthesis. Its function is as follows. Sesquiterpene synthase involved in the biosynthesis of alpha-isocomene as the major product and detectable amounts of beta-caryophyllene, beta-isocomene, silphinene and modeph-2-ene. Produces exclusively the (-)-(E)-beta caryophyllene enantiomer. This is Alpha-isocomene synthase from Matricaria chamomilla var. recutita (German chamomile).